We begin with the raw amino-acid sequence, 357 residues long: Set1 complex component swd2 (357 aa).

4 WD repeats span residues 24 to 65 (NFVG…KSLA), 110 to 149 (GHKQTVTSIDVSPADETFLSASLDNTIRLWDLRSPNCQGL), 199 to 241 (PPHV…RVPS), and 247 to 289 (TQDG…QTVN).

Belongs to the WD repeat SWD2 family. Component of the Set1 complex composed of ash2, sdc1, set1, shg1, spp1, swd1, swd2 and swd3.

The protein localises to the nucleus. Its function is as follows. The Set1 complex specifically methylates 'Lys-4' of histone H3. The sequence is that of Set1 complex component swd2 from Schizosaccharomyces pombe (strain 972 / ATCC 24843) (Fission yeast).